The following is a 238-amino-acid chain: 3-dehydroquinate dehydratase (238 aa).

Residues 35–37 (ELR) and R70 contribute to the 3-dehydroquinate site. H133 serves as the catalytic Proton donor/acceptor. K160 (schiff-base intermediate with substrate) is an active-site residue. 3-dehydroquinate is bound by residues R202 and Q225.

It belongs to the type-I 3-dehydroquinase family. Homodimer.

The enzyme catalyses 3-dehydroquinate = 3-dehydroshikimate + H2O. It participates in metabolic intermediate biosynthesis; chorismate biosynthesis; chorismate from D-erythrose 4-phosphate and phosphoenolpyruvate: step 3/7. Involved in the third step of the chorismate pathway, which leads to the biosynthesis of aromatic amino acids. Catalyzes the cis-dehydration of 3-dehydroquinate (DHQ) and introduces the first double bond of the aromatic ring to yield 3-dehydroshikimate. This chain is 3-dehydroquinate dehydratase, found in Staphylococcus aureus (strain MRSA252).